Reading from the N-terminus, the 644-residue chain is ATP-dependent zinc metalloprotease FtsH (644 aa).

The Cytoplasmic segment spans residues Met-1–Asn-4. Residues Leu-5 to Ser-25 form a helical membrane-spanning segment. The Periplasmic portion of the chain corresponds to Glu-26 to Leu-98. A helical membrane pass occupies residues Leu-99 to Phe-119. Residues Met-120–Lys-644 lie on the Cytoplasmic side of the membrane. Gly-192–Thr-199 contacts ATP. His-414 provides a ligand contact to Zn(2+). The active site involves Glu-415. His-418 and Asp-492 together coordinate Zn(2+). The tract at residues Arg-599–Lys-644 is disordered. Polar residues-rich tracts occupy residues Asn-608–Pro-619 and Asn-632–Lys-644.

This sequence in the central section; belongs to the AAA ATPase family. In the C-terminal section; belongs to the peptidase M41 family. Homohexamer. Requires Zn(2+) as cofactor.

The protein localises to the cell inner membrane. Its function is as follows. Acts as a processive, ATP-dependent zinc metallopeptidase for both cytoplasmic and membrane proteins. Plays a role in the quality control of integral membrane proteins. The chain is ATP-dependent zinc metalloprotease FtsH from Salmonella typhi.